Consider the following 404-residue polypeptide: Cysteine desulfurase IscS (404 aa).

Pyridoxal 5'-phosphate-binding positions include 75-76, Asn-155, Gln-183, and 203-205; these read AT and SAH. Lys-206 is modified (N6-(pyridoxal phosphate)lysine). Residue Thr-243 coordinates pyridoxal 5'-phosphate. Catalysis depends on Cys-328, which acts as the Cysteine persulfide intermediate. [2Fe-2S] cluster is bound at residue Cys-328.

The protein belongs to the class-V pyridoxal-phosphate-dependent aminotransferase family. NifS/IscS subfamily. In terms of assembly, homodimer. Forms a heterotetramer with IscU, interacts with other sulfur acceptors. Pyridoxal 5'-phosphate is required as a cofactor.

The protein resides in the cytoplasm. It carries out the reaction (sulfur carrier)-H + L-cysteine = (sulfur carrier)-SH + L-alanine. The protein operates within cofactor biosynthesis; iron-sulfur cluster biosynthesis. In terms of biological role, master enzyme that delivers sulfur to a number of partners involved in Fe-S cluster assembly, tRNA modification or cofactor biosynthesis. Catalyzes the removal of elemental sulfur atoms from cysteine to produce alanine. Functions as a sulfur delivery protein for Fe-S cluster synthesis onto IscU, an Fe-S scaffold assembly protein, as well as other S acceptor proteins. The chain is Cysteine desulfurase IscS from Pseudomonas syringae pv. syringae (strain B728a).